The following is a 427-amino-acid chain: Glutamate-1-semialdehyde 2,1-aminomutase (427 aa).

Lys-265 carries the post-translational modification N6-(pyridoxal phosphate)lysine.

The protein belongs to the class-III pyridoxal-phosphate-dependent aminotransferase family. HemL subfamily. As to quaternary structure, homodimer. It depends on pyridoxal 5'-phosphate as a cofactor.

Its subcellular location is the cytoplasm. It carries out the reaction (S)-4-amino-5-oxopentanoate = 5-aminolevulinate. It participates in porphyrin-containing compound metabolism; protoporphyrin-IX biosynthesis; 5-aminolevulinate from L-glutamyl-tRNA(Glu): step 2/2. This Burkholderia vietnamiensis (strain G4 / LMG 22486) (Burkholderia cepacia (strain R1808)) protein is Glutamate-1-semialdehyde 2,1-aminomutase.